The primary structure comprises 980 residues: Putative leucine-rich repeat receptor-like serine/threonine-protein kinase At2g24130 (980 aa).

An N-terminal signal peptide occupies residues 1-20 (MDYCSLLVVSFLITVMTVLA). The Extracellular portion of the chain corresponds to 21–593 (SKENDHELIK…ACKKKHKYPS (573 aa)). N-linked (GlcNAc...) asparagine glycosylation is found at asparagine 55 and asparagine 88. LRR repeat units follow at residues 65-89 (STQVIELDISGRDLGGEISPSIANL), 90-113 (TGLTVLDLSRNFFVGKIPPEIGSL), 115-138 (ETLKQLSLSENLLHGNIPQELGLL), 139-162 (NRLVYLDLGSNRLNGSIPVQLFCN), 165-189 (SSSLQYIDLSNNSLTGEIPLNYHCH), 191-214 (KELRFLLLWSNKLTGTVPSSLSNS), 215-238 (TNLKWMDLESNMLSGELPSQVISK), and 240-263 (PQLQFLYLSYNHFVSHNNNTNLEP). N-linked (GlcNAc...) asparagine glycosylation is found at asparagine 152, asparagine 162, asparagine 175, and asparagine 213. Asparagine 257 and asparagine 270 each carry an N-linked (GlcNAc...) asparagine glycan. 12 LRR repeats span residues 271–295 (SSDLQELELAGNSLGGEITSSVRHL), 296–320 (SVNLVQIHLDQNRIHGSIPPEISNL), 322–344 (NLTLLNLSSNLLSGPIPRELCKL), 345–370 (SKLERVYLSNNHLTGEIPMELGDIPR), 372–391 (GLLDVSRNNLSGSIPDSFGN), 392–416 (LSQLRRLLLYGNHLSGTVPQSLGKC), 417–440 (INLEILDLSHNNLTGTIPVEVVSN), 442–463 (RNLKLYLNLSSNHLSGPIPLEL), 464–490 (SKMDMVLSVDLSSNELSGKIPPQLGSC), 491–514 (IALEHLNLSRNGFSSTLPSSLGQL), 515–537 (PYLKELDVSFNRLTGAIPPSFQQ), and 539–563 (STLKHLNFSFNLLSGNVSDKGSFSK). Asparagine 322 and asparagine 327 each carry an N-linked (GlcNAc...) asparagine glycan. Asparagine 380 and asparagine 391 each carry an N-linked (GlcNAc...) asparagine glycan. N-linked (GlcNAc...) asparagine glycosylation is found at asparagine 428 and asparagine 449. Asparagine 497 carries an N-linked (GlcNAc...) asparagine glycan. Residues asparagine 545 and asparagine 554 are each glycosylated (N-linked (GlcNAc...) asparagine). The helical transmembrane segment at 594–614 (VLLPVLLSLIATPVLCVFGYP) threads the bilayer. The Cytoplasmic segment spans residues 615–980 (LVQRSRFGKN…SQETQGEASS (366 aa)). Position 658 is a phosphothreonine (threonine 658). The 300-residue stretch at 661–960 (FNASSLIGSG…HEMGRLKEYL (300 aa)) folds into the Protein kinase domain. Residues 667–675 (IGSGRFGHV) and lysine 689 each bind ATP. Tyrosine 775 carries the phosphotyrosine modification. Aspartate 788 functions as the Proton acceptor in the catalytic mechanism. Residue tyrosine 841 is modified to Phosphotyrosine.

This sequence belongs to the protein kinase superfamily. Ser/Thr protein kinase family.

The protein localises to the cell membrane. The enzyme catalyses L-seryl-[protein] + ATP = O-phospho-L-seryl-[protein] + ADP + H(+). It catalyses the reaction L-threonyl-[protein] + ATP = O-phospho-L-threonyl-[protein] + ADP + H(+). This Arabidopsis thaliana (Mouse-ear cress) protein is Putative leucine-rich repeat receptor-like serine/threonine-protein kinase At2g24130.